A 572-amino-acid chain; its full sequence is NADH-ubiquinone oxidoreductase chain 5 (572 aa).

The next 16 helical transmembrane spans lie at 4 to 24 (ISFV…LYFL), 44 to 64 (IVMT…VLMI), 86 to 106 (IMLV…PNLI), 107 to 127 (SILL…IYFQ), 147 to 167 (VALL…YIFY), 170 to 190 (IMQN…AAMT), 217 to 237 (SSTL…ILST), 239 to 259 (WLGQ…GLGA), 268 to 288 (IIAL…SMGF), 294 to 314 (FHLL…GAII), 337 to 357 (SACF…AGFY), 372 to 394 (NMFS…FRLV), 422 to 442 (MGLL…IFPF), 457 to 477 (LFVC…NLFF), 490 to 510 (FLGS…FYPL), and 552 to 572 (LKIY…LLFL).

This sequence belongs to the complex I subunit 5 family.

It localises to the mitochondrion inner membrane. The catalysed reaction is a ubiquinone + NADH + 5 H(+)(in) = a ubiquinol + NAD(+) + 4 H(+)(out). Core subunit of the mitochondrial membrane respiratory chain NADH dehydrogenase (Complex I) that is believed to belong to the minimal assembly required for catalysis. Complex I functions in the transfer of electrons from NADH to the respiratory chain. The immediate electron acceptor for the enzyme is believed to be ubiquinone. The chain is NADH-ubiquinone oxidoreductase chain 5 (mt:ND5) from Drosophila melanogaster (Fruit fly).